The chain runs to 506 residues: Ubiquitin carboxyl-terminal hydrolase 22 (506 aa).

Residues 4–121 (AGCSHVNGFK…KEEQRKAWKL (118 aa)) form a UBP-type zinc finger. 12 residues coordinate Zn(2+): Cys6, His8, Cys46, Cys49, Cys59, Cys62, Cys67, His72, His76, His82, Cys95, and Cys98. In terms of domain architecture, USP spans 159-501 (RGLINLGNTC…EGYLLFYHKQ (343 aa)). The active-site Nucleophile is the Cys168. His460 (proton acceptor) is an active-site residue.

The protein belongs to the peptidase C19 family. UBP8 subfamily. As to quaternary structure, component of some SAGA transcription coactivator-HAT complexes.

Its subcellular location is the nucleus. The enzyme catalyses Thiol-dependent hydrolysis of ester, thioester, amide, peptide and isopeptide bonds formed by the C-terminal Gly of ubiquitin (a 76-residue protein attached to proteins as an intracellular targeting signal).. Its function is as follows. Histone deubiquitinating component of the transcription regulatory histone acetylation (HAT) complex SAGA. Catalyzes the deubiquitination of both histones H2A and H2B, thereby acting as a coactivator. Recruited to specific gene promoters by activators, where it is required for transcription. This is Ubiquitin carboxyl-terminal hydrolase 22 (usp22) from Danio rerio (Zebrafish).